A 528-amino-acid chain; its full sequence is Inositol-3-phosphate synthase (528 aa).

The NAD(+) site is built by G66, G67, N68, N69, D140, Q187, R190, T228, A229, N230, T231, G279, D304, S307, N338, N339, D340, K353, G392, D393, D421, and S422.

The protein belongs to the myo-inositol 1-phosphate synthase family. The cofactor is NAD(+).

It localises to the cytoplasm. The protein resides in the cytosol. The catalysed reaction is D-glucose 6-phosphate = 1D-myo-inositol 3-phosphate. The protein operates within polyol metabolism; myo-inositol biosynthesis; myo-inositol from D-glucose 6-phosphate: step 1/2. Activated by ammonium ions. Key enzyme in myo-inositol biosynthesis pathway that catalyzes the conversion of glucose 6-phosphate to 1-myo-inositol 1-phosphate in a NAD-dependent manner. Rate-limiting enzyme in the synthesis of all inositol-containing compounds. De novo-synthesized myo-inositol is essential for incorporation into GPI (glycosylphosphatidylinositol) glycolipids in the bloodstream form. The chain is Inositol-3-phosphate synthase from Trypanosoma brucei brucei.